Consider the following 109-residue polypeptide: uncharacterized protein (109 aa).

A signal peptide spans 1–25 (MKGIFLVVQLGFSIMVFLFLAAVNW). A helical membrane pass occupies residues 73–95 (YPVMSALMIISFLYVLAALFLLI).

It localises to the membrane. This is an uncharacterized protein from Bacillus subtilis (strain 168).